The primary structure comprises 228 residues: Lipoprotein-releasing system ATP-binding protein LolD (228 aa).

An ABC transporter domain is found at 5 to 228 (LRCHQVCKTY…DGLLTDITGA (224 aa)). 41 to 48 (GSSGSGKS) is an ATP binding site.

It belongs to the ABC transporter superfamily. Lipoprotein translocase (TC 3.A.1.125) family. The complex is composed of two ATP-binding proteins (LolD) and two transmembrane proteins (LolC and LolE).

Its subcellular location is the cell inner membrane. In terms of biological role, part of the ABC transporter complex LolCDE involved in the translocation of mature outer membrane-directed lipoproteins, from the inner membrane to the periplasmic chaperone, LolA. Responsible for the formation of the LolA-lipoprotein complex in an ATP-dependent manner. The chain is Lipoprotein-releasing system ATP-binding protein LolD from Vibrio cholerae serotype O1 (strain ATCC 39315 / El Tor Inaba N16961).